Here is a 232-residue protein sequence, read N- to C-terminus: Ion-translocating oxidoreductase complex subunit E (232 aa).

The next 6 helical transmembrane spans lie at 18 to 38 (GLVQ…LTNA), 39 to 59 (LGLG…VSLV), 69 to 89 (IPVF…VINA), 93 to 113 (GLYL…VIIG), 128 to 148 (AFDG…LGAV), and 182 to 202 (SFLL…LIAG).

The protein belongs to the NqrDE/RnfAE family. As to quaternary structure, the complex is composed of six subunits: RnfA, RnfB, RnfC, RnfD, RnfE and RnfG.

It localises to the cell inner membrane. In terms of biological role, part of a membrane-bound complex that couples electron transfer with translocation of ions across the membrane. The chain is Ion-translocating oxidoreductase complex subunit E from Shewanella amazonensis (strain ATCC BAA-1098 / SB2B).